The primary structure comprises 744 residues: Cullin-3 (744 aa).

The region spanning methionine 677 to aspartate 736 is the Cullin neddylation domain. A Glycyl lysine isopeptide (Lys-Gly) (interchain with G-Cter in NEDD8) cross-link involves residue lysine 688.

The protein belongs to the cullin family. Component of a ubiquitin-protein ligase complex consisting of the cullin CUL3, the linker protein ELC1, the substrate receptor ELA1, and the RING protein HRT1. Post-translationally, neddylated; enhancing the ubiquitin-ligase activity.

It functions in the pathway protein modification; protein ubiquitination. Its function is as follows. As part of the CRL3 E3 ubiquitin ligase complex; polyubiquitylates monoubiquitylated RNA polymerase II subunit RPO21 to trigger its proteolysis; plays a role in global genomic repair. This Saccharomyces cerevisiae (strain ATCC 204508 / S288c) (Baker's yeast) protein is Cullin-3 (CUL3).